We begin with the raw amino-acid sequence, 283 residues long: MAAITAALIKQVREDTGAGMLDVKKALTEAEGDVARAKEIIRAKGIAAAGKREGRKAQEGTIASKVVETANGETGYAVELNSETDFVAKTPKFVEFTEEVLGYAVDADANSADELLEAKAGDTTVKLAVEEAAALFGEHVKVGQFAKISGEHVEVYAHKKSAEMPPSIVAMIATDKAGAAVAHEAALQISAMGAKWLTREDVPADVVESERRVATEKSLAEGKPEKIVPKIVEGRLNAFFKEVVLLEQPFVKDPSKTVGDLFKEVGGNATAFARVEVGKGEEE.

The tract at residues 84-87 (TDFV) is involved in Mg(2+) ion dislocation from EF-Tu.

Belongs to the EF-Ts family.

Its subcellular location is the cytoplasm. In terms of biological role, associates with the EF-Tu.GDP complex and induces the exchange of GDP to GTP. It remains bound to the aminoacyl-tRNA.EF-Tu.GTP complex up to the GTP hydrolysis stage on the ribosome. This Bifidobacterium longum (strain DJO10A) protein is Elongation factor Ts.